A 142-amino-acid chain; its full sequence is MAIIIGADKAGQELKEVIKDYLKEGKYEVVDVSENEVRDFVDTTLAVVKEVNASDDNLGIVIDAYGVGSFMVATKIKGMVAAEVSDERSAYMTRGHNNARIITLGSEISAPGIAKNIIKGFVEGKYDGGRHQVRVDMLNKMC.

The protein belongs to the LacAB/RpiB family. As to quaternary structure, heteromultimeric protein consisting of LacA and LacB.

It carries out the reaction aldehydo-D-galactose 6-phosphate = keto-D-tagatose 6-phosphate. It functions in the pathway carbohydrate metabolism; D-galactose 6-phosphate degradation; D-tagatose 6-phosphate from D-galactose 6-phosphate: step 1/1. The chain is Galactose-6-phosphate isomerase subunit LacA 2 from Streptococcus pyogenes serotype M1.